We begin with the raw amino-acid sequence, 203 residues long: MADPRIEELPDEEVPKTNVEDAADSSESEAGEEPTIPGGAAVTIHSRNEKKARKAIGKLGLKHVPGITRVTLRRPKNILFVINQPDVYRSPSSNTWIIFGEAKIEDLNSQAQASAAQQLAAAEAAGEHAGHDHDHDKGKGKAPETEAKKEEEEDDGEEVDETGLEPKDIDLVMAQANVSRKKAVKALRENDNDIVNSIMALSI.

The span at M1–V19 shows a compositional bias: basic and acidic residues. Residues M1 to H45 form a disordered region. Residues D21–E32 are compositionally biased toward acidic residues. Positions S46–A111 constitute an NAC-A/B domain. Residues Q118–K167 are disordered. The span at A125 to E150 shows a compositional bias: basic and acidic residues. Residues E151–G163 show a composition bias toward acidic residues. Residues L164–I203 form the UBA domain.

This sequence belongs to the NAC-alpha family. As to quaternary structure, part of the nascent polypeptide-associated complex (NAC), consisting of egd2 and egd1. NAC associates with ribosomes via egd1.

The protein localises to the cytoplasm. It is found in the nucleus. Functionally, component of the nascent polypeptide-associated complex (NAC), a dynamic component of the ribosomal exit tunnel, protecting the emerging polypeptides from interaction with other cytoplasmic proteins to ensure appropriate nascent protein targeting. The NAC complex also promotes mitochondrial protein import by enhancing productive ribosome interactions with the outer mitochondrial membrane and blocks the inappropriate interaction of ribosomes translating non-secretory nascent polypeptides with translocation sites in the membrane of the endoplasmic reticulum. Egd2 may also be involved in transcription regulation. The polypeptide is Nascent polypeptide-associated complex subunit alpha (egd2) (Emericella nidulans (strain FGSC A4 / ATCC 38163 / CBS 112.46 / NRRL 194 / M139) (Aspergillus nidulans)).